Consider the following 407-residue polypeptide: Proteasome-activating nucleotidase (407 aa).

A coiled-coil region spans residues Lys22–Ile67. ATP contacts are provided by residues Gly192–Leu197 and His331. The tract at residues Met405–Gly407 is docks into pockets in the proteasome alpha-ring to cause gate opening.

The protein belongs to the AAA ATPase family. In terms of assembly, homohexamer. The hexameric complex has a two-ring architecture resembling a top hat that caps the 20S proteasome core at one or both ends. Upon ATP-binding, the C-terminus of PAN interacts with the alpha-rings of the proteasome core by binding to the intersubunit pockets.

The protein resides in the cytoplasm. Functionally, ATPase which is responsible for recognizing, binding, unfolding and translocation of substrate proteins into the archaeal 20S proteasome core particle. Is essential for opening the gate of the 20S proteasome via an interaction with its C-terminus, thereby allowing substrate entry and access to the site of proteolysis. Thus, the C-termini of the proteasomal ATPase function like a 'key in a lock' to induce gate opening and therefore regulate proteolysis. Unfolding activity requires energy from ATP hydrolysis, whereas ATP binding alone promotes ATPase-20S proteasome association which triggers gate opening, and supports translocation of unfolded substrates. This chain is Proteasome-activating nucleotidase, found in Methanococcus maripaludis (strain C7 / ATCC BAA-1331).